The following is a 277-amino-acid chain: Small ribosomal subunit protein uS2 (277 aa).

The disordered stretch occupies residues 255–277 (AVATTDEASAPSAAATETTTEEG). Residues 257–277 (ATTDEASAPSAAATETTTEEG) are compositionally biased toward low complexity.

Belongs to the universal ribosomal protein uS2 family.

The sequence is that of Small ribosomal subunit protein uS2 from Mycobacteroides abscessus (strain ATCC 19977 / DSM 44196 / CCUG 20993 / CIP 104536 / JCM 13569 / NCTC 13031 / TMC 1543 / L948) (Mycobacterium abscessus).